Here is a 498-residue protein sequence, read N- to C-terminus: Probable malate:quinone oxidoreductase 2 (498 aa).

This sequence belongs to the MQO family. Requires FAD as cofactor.

It catalyses the reaction (S)-malate + a quinone = a quinol + oxaloacetate. The protein operates within carbohydrate metabolism; tricarboxylic acid cycle; oxaloacetate from (S)-malate (quinone route): step 1/1. The chain is Probable malate:quinone oxidoreductase 2 from Staphylococcus epidermidis (strain ATCC 12228 / FDA PCI 1200).